Here is a 432-residue protein sequence, read N- to C-terminus: Ribosomal protein uS12 methylthiotransferase RimO (432 aa).

In terms of domain architecture, MTTase N-terminal spans 1–112 (MKIGVVSLGC…ILNYLGLKEK (112 aa)). Residues cysteine 10, cysteine 46, cysteine 75, cysteine 134, cysteine 138, and cysteine 141 each contribute to the [4Fe-4S] cluster site. A Radical SAM core domain is found at 120–350 (STPRSYAYLK…MAIQRGITRK (231 aa)). Positions 353–422 (EEFLGKEIEV…DYDLAGRDTE (70 aa)) constitute a TRAM domain.

This sequence belongs to the methylthiotransferase family. RimO subfamily. The cofactor is [4Fe-4S] cluster.

The protein resides in the cytoplasm. The catalysed reaction is L-aspartate(89)-[ribosomal protein uS12]-hydrogen + (sulfur carrier)-SH + AH2 + 2 S-adenosyl-L-methionine = 3-methylsulfanyl-L-aspartate(89)-[ribosomal protein uS12]-hydrogen + (sulfur carrier)-H + 5'-deoxyadenosine + L-methionine + A + S-adenosyl-L-homocysteine + 2 H(+). Functionally, catalyzes the methylthiolation of an aspartic acid residue of ribosomal protein uS12. The polypeptide is Ribosomal protein uS12 methylthiotransferase RimO (Aquifex aeolicus (strain VF5)).